A 150-amino-acid chain; its full sequence is Cell division protein SepF (150 aa).

The protein belongs to the SepF family. Homodimer. Interacts with FtsZ.

The protein localises to the cytoplasm. Cell division protein that is part of the divisome complex and is recruited early to the Z-ring. Probably stimulates Z-ring formation, perhaps through the cross-linking of FtsZ protofilaments. Its function overlaps with FtsA. This chain is Cell division protein SepF, found in Clostridium kluyveri (strain NBRC 12016).